Reading from the N-terminus, the 453-residue chain is 13-hydroxylupanine O-tigloyltransferase (453 aa).

Active-site proton acceptor residues include H166 and D385.

Belongs to the plant acyltransferase family. In terms of assembly, monomer. Expressed in roots and hypocotyls. Detected in seeds, leaves and cotyledons, but not in young developing leaves.

It carries out the reaction 13-hydroxylupanine + (2E)-2-methylbut-2-enoyl-CoA = 13-(2-methylcrotonoyloxy)lupanine + CoA. Inhibited by N-ethylmaleimide, p-chloromercuribenzoic acid and diethylpyrocarbonate (DEPC). Functionally, acyl-CoA-dependent acyltransferase involved in the synthesis of lupanine alkaloids. Can use both (-)-13alpha-hydroxymultiflorine and (+)-13alpha-hydroxylupanine as substrates. Lower activity with (-)-3beta, 13alpha-dihydroxylupanine, but no activity with (+)-epilupinine and (-)-lupinine as substrates. Tigloyl-CoA, benzoyl-CoA and, more slowly, acetyl-CoA, propionyl-CoA and 2-butenoyl-CoA can act as acyl donors. This is 13-hydroxylupanine O-tigloyltransferase (HMT/HLT) from Lupinus albus (White lupine).